Here is a 256-residue protein sequence, read N- to C-terminus: Enkurin (256 aa).

The SH3-binding signature appears at 83 to 89; the sequence is PKKPAVP. Positions 160-252 constitute an Enkurin domain; that stretch reads KRNEEIKKAQ…IIEKHKIIYI (93 aa). Residues 160–255 are interaction with TRPC proteins; it reads KRNEEIKKAQ…KHKIIYIANN (96 aa). Residues 176 to 187 form the IQ domain; sequence IQENLKKAAMKR.

As to quaternary structure, microtubule inner protein component of sperm flagellar doublet microtubules. Binds calmodulin via its IQ domain. Interacts with TRPC1, TRPC2, TRPC5, but not TRPC3. Interacts with CFAP45. As to expression, expressed in airway epithelial cells.

Its subcellular location is the cytoplasm. The protein resides in the cytoskeleton. It localises to the cilium axoneme. The protein localises to the flagellum axoneme. Functionally, adapter that functions to localize a calcium-sensitive signal transduction machinery in sperm to a calcium-permeable ion channel. Microtubule inner protein (MIP) part of the dynein-decorated doublet microtubules (DMTs) in cilia axoneme, which is required for motile cilia beating. In Homo sapiens (Human), this protein is Enkurin.